Reading from the N-terminus, the 94-residue chain is Small ribosomal subunit protein bS20 (94 aa).

It belongs to the bacterial ribosomal protein bS20 family.

In terms of biological role, binds directly to 16S ribosomal RNA. In Aquifex aeolicus (strain VF5), this protein is Small ribosomal subunit protein bS20.